Reading from the N-terminus, the 49-residue chain is MLRKKVTLSCEECHSMNYSTNKSLMSVDRITVKKFCRKCNKHTMHKEEK.

This sequence belongs to the bacterial ribosomal protein bL33 family.

This Mycoplasmopsis agalactiae (strain NCTC 10123 / CIP 59.7 / PG2) (Mycoplasma agalactiae) protein is Large ribosomal subunit protein bL33A.